The primary structure comprises 367 residues: DNA replication and repair protein RecF (367 aa).

30 to 37 (GANGSGKT) is an ATP binding site.

This sequence belongs to the RecF family.

The protein resides in the cytoplasm. Functionally, the RecF protein is involved in DNA metabolism; it is required for DNA replication and normal SOS inducibility. RecF binds preferentially to single-stranded, linear DNA. It also seems to bind ATP. In Pseudomonas fluorescens (strain Pf0-1), this protein is DNA replication and repair protein RecF.